A 923-amino-acid chain; its full sequence is Protein translocase subunit SecA (923 aa).

Residues Gln86, 104 to 108 (GEGKT), and Asp512 each bind ATP. Residues Cys906, Cys908, Cys917, and His918 each contribute to the Zn(2+) site.

The protein belongs to the SecA family. As to quaternary structure, monomer and homodimer. Part of the essential Sec protein translocation apparatus which comprises SecA, SecYEG and auxiliary proteins SecDF-YajC and YidC. Requires Zn(2+) as cofactor.

It localises to the cell inner membrane. It is found in the cytoplasm. It carries out the reaction ATP + H2O + cellular proteinSide 1 = ADP + phosphate + cellular proteinSide 2.. Its function is as follows. Part of the Sec protein translocase complex. Interacts with the SecYEG preprotein conducting channel. Has a central role in coupling the hydrolysis of ATP to the transfer of proteins into and across the cell membrane, serving both as a receptor for the preprotein-SecB complex and as an ATP-driven molecular motor driving the stepwise translocation of polypeptide chains across the membrane. This chain is Protein translocase subunit SecA, found in Caulobacter vibrioides (strain ATCC 19089 / CIP 103742 / CB 15) (Caulobacter crescentus).